A 566-amino-acid polypeptide reads, in one-letter code: Urease subunit alpha (566 aa).

Residues 128 to 566 form the Urease domain; it reads GGIDTHIHFI…LPMAQRYFLF (439 aa). H133, H135, and K216 together coordinate Ni(2+). N6-carboxylysine is present on K216. H218 serves as a coordination point for substrate. Residues H245 and H271 each contribute to the Ni(2+) site. H319 serves as the catalytic Proton donor. D359 is a Ni(2+) binding site.

The protein belongs to the metallo-dependent hydrolases superfamily. Urease alpha subunit family. Heterotrimer of UreA (gamma), UreB (beta) and UreC (alpha) subunits. Three heterotrimers associate to form the active enzyme. The cofactor is Ni cation. Carboxylation allows a single lysine to coordinate two nickel ions.

The protein localises to the cytoplasm. It catalyses the reaction urea + 2 H2O + H(+) = hydrogencarbonate + 2 NH4(+). Its pathway is nitrogen metabolism; urea degradation; CO(2) and NH(3) from urea (urease route): step 1/1. This is Urease subunit alpha from Pseudomonas fluorescens (strain Pf0-1).